The chain runs to 449 residues: Guanine/hypoxanthine permease GhxP (449 aa).

The Cytoplasmic segment spans residues 1-25; that stretch reads MSTPSARTGGSLDAWFKISQRGSTV. The helical transmembrane segment at 26–49 threads the bilayer; sequence RQEVVAGLTTFLAMVYSVIVVPGM. At 50–59 the chain is on the periplasmic side; the sequence is LGKAGFPPAA. The helical transmembrane segment at 60–78 threads the bilayer; the sequence is VFVATCLVAGLGSIVMGLW. Topologically, residues 79-80 are cytoplasmic; that stretch reads AN. The chain crosses the membrane as a discontinuously helical span at residues 81–97; sequence LPLAIGCAISLTAFTAF. The Periplasmic portion of the chain corresponds to 98–109; the sequence is SLVLGQHISVPV. Residues 110-129 traverse the membrane as a helical segment; sequence ALGAVFLMGVLFTVISATGI. Residues 130–141 are Cytoplasmic-facing; it reads RSWILRNLPHGV. Residues 142–162 form a helical membrane-spanning segment; the sequence is AHGTGIGIGLFLLLIAANGVG. Topologically, residues 163 to 180 are periplasmic; sequence LVIKNPLDGLPVALGDFA. Residues 181-198 traverse the membrane as a helical segment; sequence TFPVIMSLVGLAVIIGLE. Topologically, residues 199–202 are cytoplasmic; that stretch reads KLKV. A helical transmembrane segment spans residues 203 to 222; it reads PGGILLTIIGISIVGLIFDP. The Periplasmic segment spans residues 223 to 254; it reads NVHFSGVFAMPSLSDENGNSLIGSLDIMGALN. Residues 255–283 form a helical membrane-spanning segment; the sequence is PVVLPSVLALVMTAVFDATGTIRAVAGQA. The Cytoplasmic segment spans residues 284 to 296; it reads NLLDKDGQIIDGG. A helical transmembrane segment spans residues 297–312; that stretch reads KALTTDSMSSVFSGLV. Topologically, residues 313–314 are periplasmic; that stretch reads GA. Residues 315-330 form a discontinuously helical membrane-spanning segment; sequence APAAVYIESAAGTAAG. At 331–334 the chain is on the cytoplasmic side; the sequence is GKTG. A helical membrane pass occupies residues 335 to 349; that stretch reads LTAITVGVLFLLILF. At 350–360 the chain is on the periplasmic side; sequence LSPLSYLVPGY. The chain crosses the membrane as a helical span at residues 361 to 380; the sequence is ATAPALMYVGLLMLSNVAKI. The Cytoplasmic portion of the chain corresponds to 381 to 385; it reads DFADF. Positions 386–421 form an intramembrane region, discontinuously helical; sequence VDAMAGLVTAVFIVLTCNIVTGIMIGFATLVIGRLV. Over 422–449 the chain is Cytoplasmic; it reads SGEWRKLNIGTVVIAVALVTFYAGGWAI.

This sequence belongs to the nucleobase:cation symporter-2 (NCS2) (TC 2.A.40) family. Azg-like subfamily.

Its subcellular location is the cell inner membrane. In terms of biological role, high-affinity transporter for guanine and hypoxanthine. This is Guanine/hypoxanthine permease GhxP (ghxP) from Escherichia coli O157:H7.